The sequence spans 198 residues: Glycerol-3-phosphate acyltransferase (198 aa).

The next 5 membrane-spanning stretches (helical) occupy residues 2 to 22 (IIVIITVMVSFLCGSIPTGYL), 55 to 75 (MITQVMDILKGIIPVLLCMLI), 88 to 108 (YLSIIVIAVILGHDYTPFLGF), 118 to 138 (VGAFFLLAPAAVLAGAVVYFV), and 162 to 182 (IALRLPIEITVCAIIACGLLI).

Belongs to the PlsY family. Probably interacts with PlsX.

The protein localises to the cell membrane. It catalyses the reaction an acyl phosphate + sn-glycerol 3-phosphate = a 1-acyl-sn-glycero-3-phosphate + phosphate. The protein operates within lipid metabolism; phospholipid metabolism. Catalyzes the transfer of an acyl group from acyl-phosphate (acyl-PO(4)) to glycerol-3-phosphate (G3P) to form lysophosphatidic acid (LPA). This enzyme utilizes acyl-phosphate as fatty acyl donor, but not acyl-CoA or acyl-ACP. The protein is Glycerol-3-phosphate acyltransferase of Clostridium acetobutylicum (strain ATCC 824 / DSM 792 / JCM 1419 / IAM 19013 / LMG 5710 / NBRC 13948 / NRRL B-527 / VKM B-1787 / 2291 / W).